Here is a 217-residue protein sequence, read N- to C-terminus: Flagellin B1 (217 aa).

The propeptide occupies 1–12 (MKVFEFLKGKRG).

Belongs to the archaeal flagellin family.

It localises to the archaeal flagellum. Flagellin is the subunit protein which polymerizes to form the filaments of archaeal flagella. The chain is Flagellin B1 (flaB1) from Methanocaldococcus jannaschii (strain ATCC 43067 / DSM 2661 / JAL-1 / JCM 10045 / NBRC 100440) (Methanococcus jannaschii).